The primary structure comprises 178 residues: ATP-dependent protease subunit HslV (178 aa).

Residue Thr-7 is part of the active site. 3 residues coordinate Na(+): Gly-162, Cys-165, and Thr-168.

This sequence belongs to the peptidase T1B family. HslV subfamily. In terms of assembly, a double ring-shaped homohexamer of HslV is capped on each side by a ring-shaped HslU homohexamer. The assembly of the HslU/HslV complex is dependent on binding of ATP.

The protein resides in the cytoplasm. The enzyme catalyses ATP-dependent cleavage of peptide bonds with broad specificity.. Allosterically activated by HslU binding. Protease subunit of a proteasome-like degradation complex believed to be a general protein degrading machinery. This is ATP-dependent protease subunit HslV from Burkholderia multivorans (strain ATCC 17616 / 249).